Consider the following 672-residue polypeptide: Glycine--tRNA ligase beta subunit (672 aa).

Belongs to the class-II aminoacyl-tRNA synthetase family. In terms of assembly, tetramer of two alpha and two beta subunits.

The protein resides in the cytoplasm. The enzyme catalyses tRNA(Gly) + glycine + ATP = glycyl-tRNA(Gly) + AMP + diphosphate. In Thermotoga sp. (strain RQ2), this protein is Glycine--tRNA ligase beta subunit.